Here is a 336-residue protein sequence, read N- to C-terminus: Transmembrane protein 19 (336 aa).

Transmembrane regions (helical) follow at residues 15-35, 49-69, 84-104, 218-238, 257-277, and 313-333; these read MITNIVILSLIICISLAFWII, ISPWRWLFSVVVPVLIVSNGL, VVGFILTIANFSFFTSLLMFF, VTVVGLVSSLLGGTFVGIAYF, IIAFGGLAGLLGSIVDSYLGA, and VNLFSSVLIALLLPTAAWGFW.

The protein belongs to the TMEM19 family.

The protein localises to the membrane. The polypeptide is Transmembrane protein 19 (TMEM19) (Homo sapiens (Human)).